Consider the following 416-residue polypeptide: Phosphoribosylamine--glycine ligase (416 aa).

In terms of domain architecture, ATP-grasp spans 107 to 313 (KDFMKKYNVK…FVDLINAAMD (207 aa)). 133–194 (LKKCTYPIVI…EEYLEGVEAS (62 aa)) contributes to the ATP binding site. Glu283 and Asn285 together coordinate Mg(2+).

Belongs to the GARS family. Mg(2+) serves as cofactor. Mn(2+) is required as a cofactor.

It carries out the reaction 5-phospho-beta-D-ribosylamine + glycine + ATP = N(1)-(5-phospho-beta-D-ribosyl)glycinamide + ADP + phosphate + H(+). It participates in purine metabolism; IMP biosynthesis via de novo pathway; N(1)-(5-phospho-D-ribosyl)glycinamide from 5-phospho-alpha-D-ribose 1-diphosphate: step 2/2. The chain is Phosphoribosylamine--glycine ligase from Clostridium acetobutylicum (strain ATCC 824 / DSM 792 / JCM 1419 / IAM 19013 / LMG 5710 / NBRC 13948 / NRRL B-527 / VKM B-1787 / 2291 / W).